Here is an 806-residue protein sequence, read N- to C-terminus: Leucine--tRNA ligase (806 aa).

The 'HIGH' region signature appears at 40 to 51 (PYPSGQGLHVGH). The short motif at 578–582 (KMSKS) is the 'KMSKS' region element. Lys-581 lines the ATP pocket.

This sequence belongs to the class-I aminoacyl-tRNA synthetase family.

Its subcellular location is the cytoplasm. The enzyme catalyses tRNA(Leu) + L-leucine + ATP = L-leucyl-tRNA(Leu) + AMP + diphosphate. The polypeptide is Leucine--tRNA ligase (Limosilactobacillus reuteri (strain DSM 20016) (Lactobacillus reuteri)).